The following is a 424-amino-acid chain: 3-phosphoshikimate 1-carboxyvinyltransferase (424 aa).

The 3-phosphoshikimate site is built by lysine 21, serine 22, and arginine 26. Position 21 (lysine 21) interacts with phosphoenolpyruvate. Phosphoenolpyruvate-binding residues include glycine 91 and arginine 119. 3-phosphoshikimate-binding residues include serine 164, glutamine 166, aspartate 310, and lysine 337. Glutamine 166 serves as a coordination point for phosphoenolpyruvate. Aspartate 310 (proton acceptor) is an active-site residue. Phosphoenolpyruvate is bound by residues arginine 341 and arginine 382.

This sequence belongs to the EPSP synthase family. In terms of assembly, monomer.

It localises to the cytoplasm. It carries out the reaction 3-phosphoshikimate + phosphoenolpyruvate = 5-O-(1-carboxyvinyl)-3-phosphoshikimate + phosphate. It participates in metabolic intermediate biosynthesis; chorismate biosynthesis; chorismate from D-erythrose 4-phosphate and phosphoenolpyruvate: step 6/7. Functionally, catalyzes the transfer of the enolpyruvyl moiety of phosphoenolpyruvate (PEP) to the 5-hydroxyl of shikimate-3-phosphate (S3P) to produce enolpyruvyl shikimate-3-phosphate and inorganic phosphate. This Campylobacter curvus (strain 525.92) protein is 3-phosphoshikimate 1-carboxyvinyltransferase.